A 644-amino-acid chain; its full sequence is Exoribonuclease 2 (644 aa).

Residues 189-516 (REDLTALDFV…NHRLLKAVIK (328 aa)) form the RNB domain. Residues 561 to 643 (DTRFAAEIVD…ETRSIIARPV (83 aa)) form the S1 motif domain.

Belongs to the RNR ribonuclease family. RNase II subfamily.

The protein localises to the cytoplasm. It carries out the reaction Exonucleolytic cleavage in the 3'- to 5'-direction to yield nucleoside 5'-phosphates.. Involved in mRNA degradation. Hydrolyzes single-stranded polyribonucleotides processively in the 3' to 5' direction. The protein is Exoribonuclease 2 of Escherichia coli (strain ATCC 8739 / DSM 1576 / NBRC 3972 / NCIMB 8545 / WDCM 00012 / Crooks).